Consider the following 584-residue polypeptide: Isopropyl malate synthase htyA (584 aa).

The Pyruvate carboxyltransferase domain occupies 39-317 (PIWLSTDLRD…ETGLDFSNLP (279 aa)).

Belongs to the alpha-IPM synthase/homocitrate synthase family. LeuA type 2 subfamily.

It catalyses the reaction 3-methyl-2-oxobutanoate + acetyl-CoA + H2O = (2S)-2-isopropylmalate + CoA + H(+). It participates in antifungal biosynthesis. In terms of biological role, isopropyl malate synthase; part of the gene cluster that mediates the de novo generation of L-homotyrosine from acetyl-CoA and 4-hydroxyphenyl-pyruvate. L-homotyrosine is a building block of echinocandin B, a fungal lipidated cyclic hexapeptide that acts as an antifungal agent. L-homotyrosine 4-hydroxyphenyl-pyruvate first undergoes an aldol-type condensation by htyA with the C-2 of acetyl-CoA followed by the release of CoA to form 2-(4-hydroxybenzyl)-malate. This is followed by isomerization of 2-(4-hydroxy-benzyl)-malate to 3-(4-hydroxybenzyl)-malate by htyD. Thereafter, 3-(4-hydroxybenzyl)-malate undergoes decarboxylation and oxidation to form 2-oxo-4-(4-hydroxybenzyl)butanoic acid, coupled to reduction of NAD(+) to NADH by htyC. The product then undergoes transamination catalyzed by htyB to form L-homotyrosine. The protein is Isopropyl malate synthase htyA of Aspergillus rugulosus (Emericella rugulosa).